Reading from the N-terminus, the 707-residue chain is Toxin RTX-I translocation ATP-binding protein (707 aa).

The Peptidase C39 domain maps to 1–125 (MDFYREEDYG…SLYQGKLILV (125 aa)). His83 is an active-site residue. The ABC transmembrane type-1 domain occupies 154-436 (FIETLIVSIF…LAQLWQDFQQ (283 aa)). The next 5 membrane-spanning stretches (helical) occupy residues 158 to 178 (LIVS…FQVV), 188 to 208 (FSTL…EIVL), 295 to 315 (LVIL…SPIL), 387 to 407 (VVMV…DLSI), and 410 to 430 (LIAF…LAQL). One can recognise an ABC transporter domain in the interval 468–703 (ITFRNIRFRY…PNGLYHYLHQ (236 aa)). 502 to 509 (GRSGSGKS) serves as a coordination point for ATP.

It belongs to the ABC transporter superfamily. Protein-1 exporter (TC 3.A.1.109) family. As to quaternary structure, homodimer.

It localises to the cell membrane. Its function is as follows. Involved in the transport of the toxin RTX-I as well as that of RTX-II. This Actinobacillus pleuropneumoniae (Haemophilus pleuropneumoniae) protein is Toxin RTX-I translocation ATP-binding protein (apxIB).